The primary structure comprises 1446 residues: Receptor-type tyrosine-protein phosphatase U (1446 aa).

An N-terminal signal peptide occupies residues 1 to 18 (MARAQALVLALTFQFCAP). Over 19-749 (ETETPAAGCT…QRSEEMGLIL (731 aa)) the chain is Extracellular. An MAM domain is found at 25 to 188 (AGCTFEEASD…ILLFSYPCAK (164 aa)). Residue Asn75 is glycosylated (N-linked (GlcNAc...) asparagine). The Ig-like C2-type domain maps to 190 to 275 (PHFSRLGDVE…SQAPRGAGVS (86 aa)). Cys210 and Cys264 are joined by a disulfide. Fibronectin type-III domains lie at 288-383 (PIAP…CAEP), 386-484 (APKG…TDED), 485-591 (VPGG…SAPS), and 592-668 (FDYA…FGAE). N-linked (GlcNAc...) asparagine glycosylation occurs at Asn410. The N-linked (GlcNAc...) asparagine glycan is linked to Asn685. A helical transmembrane segment spans residues 750–770 (GICAGGLAVLILLLGAIIVII). Residues 771-887 (RKGRDRYAYS…DLLQHINQMK (117 aa)) are mediates interaction with CTNNB1. Residues 771–1446 (RKGRDRYAYS…LEYLEALELR (676 aa)) lie on the Cytoplasmic side of the membrane. Residues 830-867 (PGYSPRGDQRSGGVTEASSLLGGSPRRPCGRKGSPYHT) form a disordered region. 3 positions are modified to phosphoserine: Ser848, Ser853, and Ser863. Residue Tyr865 is modified to Phosphotyrosine. Tyrosine-protein phosphatase domains follow at residues 888 to 1144 (TAEG…ILEA) and 1176 to 1439 (LREE…ALEY). Substrate is bound by residues Glu1053, 1085–1091 (CSAGTGR), and Gln1129. The active-site Phosphocysteine intermediate is the Cys1085. Cys1380 acts as the Phosphocysteine intermediate in catalysis.

It belongs to the protein-tyrosine phosphatase family. Receptor class 2B subfamily. Forms homooligomeric complexes which mediate cell homotypic adhesion. Interacts (via the cytoplasmic juxtamembrane domain) with CTNNB1; may mediate interaction with the cadherin/catenin adhesion complex. Interacts with KIT. May interact with AP3B1. Post-translationally, the extracellular domain is proteolytically processed through cleavage within the fibronectin type-III 4 domain. In addition to the 190 kDa full-length protein, proteolytic products of 100 kDa, 80 kDa and 73 kDa are observed. N-glycosylated. In terms of processing, phosphorylated on tyrosine residues upon activation of KIT with stem cell factor (SCF). The 73 kDa proteolytic product is not phosphorylated. In terms of tissue distribution, transcripts of different sizes are differentially expressed in a subset of tissues. Detected in brain, lung, skeletal muscle, heart, kidney and placenta. In brain; expressed in olfactory bulb, cerebral cortex, hippocampus and cerebellum.

It is found in the cell junction. The protein resides in the cell membrane. It carries out the reaction O-phospho-L-tyrosyl-[protein] + H2O = L-tyrosyl-[protein] + phosphate. Tyrosine-protein phosphatase which dephosphorylates CTNNB1. Regulates CTNNB1 function both in cell adhesion and signaling. May function in cell proliferation and migration and play a role in the maintenance of epithelial integrity. May play a role in megakaryocytopoiesis. This Mus musculus (Mouse) protein is Receptor-type tyrosine-protein phosphatase U (Ptpru).